We begin with the raw amino-acid sequence, 147 residues long: Hemoglobin subunit beta-1 (147 aa).

In terms of domain architecture, Globin spans H3 to H147. Residues H64 and H93 each coordinate heme b.

Belongs to the globin family. Hb1 is a heterotetramer of two alpha-1 chains and two beta-1 chains. Red blood cells.

Its function is as follows. Involved in oxygen transport from gills to the various peripheral tissues. The chain is Hemoglobin subunit beta-1 from Liparis tunicatus (Kelp snailfish).